A 202-amino-acid chain; its full sequence is LexA repressor (202 aa).

Residues Ser123 and Lys159 each act as for autocatalytic cleavage activity in the active site.

Belongs to the peptidase S24 family. As to quaternary structure, homodimer.

The catalysed reaction is Hydrolysis of Ala-|-Gly bond in repressor LexA.. Its function is as follows. Binds the consensus sequence 5'-TGTTC-N(4)-GAACA-3'; some genes have a tandem consensus sequence, at high concentrations their binding is cooperative. Binds to the promoters of a number of genes, including dinB, imuA, lexA, recA, recQ, splB and uvrA. Represses a number of genes involved in the response to DNA damage (SOS response). In the presence of single-stranded DNA, RecA interacts with LexA causing an autocatalytic cleavage which disrupts the DNA-binding part of LexA, leading to derepression of the SOS regulon and eventually DNA repair. The polypeptide is LexA repressor (Verrucomicrobium spinosum (strain ATCC 43997 / DSM 4136 / JCM 18804 / IFAM 1439)).